We begin with the raw amino-acid sequence, 156 residues long: Small ribosomal subunit protein uS7 (156 aa).

This sequence belongs to the universal ribosomal protein uS7 family. As to quaternary structure, part of the 30S ribosomal subunit. Contacts proteins S9 and S11.

One of the primary rRNA binding proteins, it binds directly to 16S rRNA where it nucleates assembly of the head domain of the 30S subunit. Is located at the subunit interface close to the decoding center, probably blocks exit of the E-site tRNA. The sequence is that of Small ribosomal subunit protein uS7 from Streptococcus pyogenes serotype M1.